Consider the following 886-residue polypeptide: Alanine--tRNA ligase (886 aa).

Zn(2+) is bound by residues His-570, His-574, Cys-673, and His-677.

The protein belongs to the class-II aminoacyl-tRNA synthetase family. Requires Zn(2+) as cofactor.

It localises to the cytoplasm. The catalysed reaction is tRNA(Ala) + L-alanine + ATP = L-alanyl-tRNA(Ala) + AMP + diphosphate. In terms of biological role, catalyzes the attachment of alanine to tRNA(Ala) in a two-step reaction: alanine is first activated by ATP to form Ala-AMP and then transferred to the acceptor end of tRNA(Ala). Also edits incorrectly charged Ser-tRNA(Ala) and Gly-tRNA(Ala) via its editing domain. The chain is Alanine--tRNA ligase from Chlorobium chlorochromatii (strain CaD3).